A 541-amino-acid chain; its full sequence is Membrane protein insertase YidC (541 aa).

The next 5 membrane-spanning stretches (helical) occupy residues 7-27 (LLFM…QVDY), 345-365 (LVQN…AVLY), 415-435 (LGGC…YWTF), 453-473 (LSAQ…MFLL), and 492-512 (FMPL…VLYW).

Belongs to the OXA1/ALB3/YidC family. Type 1 subfamily. Interacts with the Sec translocase complex via SecD. Specifically interacts with transmembrane segments of nascent integral membrane proteins during membrane integration.

The protein localises to the cell inner membrane. Functionally, required for the insertion and/or proper folding and/or complex formation of integral membrane proteins into the membrane. Involved in integration of membrane proteins that insert both dependently and independently of the Sec translocase complex, as well as at least some lipoproteins. Aids folding of multispanning membrane proteins. This chain is Membrane protein insertase YidC, found in Histophilus somni (strain 2336) (Haemophilus somnus).